The chain runs to 380 residues: Cytochrome b (380 aa).

The next 4 helical transmembrane spans lie at 33-53 (FGSLLGLCLIIQILTGLFLAM), 77-98 (WLIRYMHANGASMFFICLFLHV), 113-133 (WNMGIILLFAVMATAFMGYVL), and 178-198 (FFAFHFILPFIITALVLVHLL). Heme b-binding residues include H83 and H97. Residues H182 and H196 each contribute to the heme b site. An a ubiquinone-binding site is contributed by H201. Helical transmembrane passes span 226–246 (IKDFLGVLVLLMAFMILVLFF), 288–308 (LGGVLALILSILILALMPLLH), 320–340 (ITQTMYWILVADLLILTWIGG), and 347–367 (FIMIGQAASIAYFAIIVIFMP).

The protein belongs to the cytochrome b family. In terms of assembly, the cytochrome bc1 complex contains 11 subunits: 3 respiratory subunits (MT-CYB, CYC1 and UQCRFS1), 2 core proteins (UQCRC1 and UQCRC2) and 6 low-molecular weight proteins (UQCRH/QCR6, UQCRB/QCR7, UQCRQ/QCR8, UQCR10/QCR9, UQCR11/QCR10 and a cleavage product of UQCRFS1). This cytochrome bc1 complex then forms a dimer. Heme b serves as cofactor.

The protein resides in the mitochondrion inner membrane. In terms of biological role, component of the ubiquinol-cytochrome c reductase complex (complex III or cytochrome b-c1 complex) that is part of the mitochondrial respiratory chain. The b-c1 complex mediates electron transfer from ubiquinol to cytochrome c. Contributes to the generation of a proton gradient across the mitochondrial membrane that is then used for ATP synthesis. The chain is Cytochrome b (MT-CYB) from Chionomys roberti (Robert's snow vole).